The following is a 214-amino-acid chain: Octanoyltransferase (214 aa).

Positions 32-207 (EDTLDEIWLV…NLLALLNHPP (176 aa)) constitute a BPL/LPL catalytic domain. Substrate contacts are provided by residues 71 to 78 (RGGQVTYH), 138 to 140 (SLG), and 151 to 153 (GLA). Cys-169 (acyl-thioester intermediate) is an active-site residue.

Belongs to the LipB family.

The protein localises to the cytoplasm. The enzyme catalyses octanoyl-[ACP] + L-lysyl-[protein] = N(6)-octanoyl-L-lysyl-[protein] + holo-[ACP] + H(+). It participates in protein modification; protein lipoylation via endogenous pathway; protein N(6)-(lipoyl)lysine from octanoyl-[acyl-carrier-protein]: step 1/2. Its function is as follows. Catalyzes the transfer of endogenously produced octanoic acid from octanoyl-acyl-carrier-protein onto the lipoyl domains of lipoate-dependent enzymes. Lipoyl-ACP can also act as a substrate although octanoyl-ACP is likely to be the physiological substrate. The sequence is that of Octanoyltransferase from Klebsiella pneumoniae subsp. pneumoniae (strain ATCC 700721 / MGH 78578).